The chain runs to 25 residues: Caerin-1.6 (25 aa).

The residue at position 25 (Leu-25) is a Leucine amide.

Belongs to the frog skin active peptide (FSAP) family. Caerin subfamily. In terms of tissue distribution, expressed by the skin dorsal glands.

It localises to the secreted. Functionally, antimicrobial peptide. Adopts an alpha helical conformation which can disrupt bacterial membranes. Strongly inhibits the formation of NO by neuronal nitric oxide synthase (nNOS) at micromolar concentrations. Acts by a non-competitive mechanism, probably by binding to calcium/calmodulin and as a consequence blocking calmodulin attachment to nNOS. Does not show antimicrobial activity. In Ranoidea chloris (Red-eyed tree frog), this protein is Caerin-1.6.